A 368-amino-acid chain; its full sequence is F-box/kelch-repeat protein At5g51250 (368 aa).

The F-box domain maps to 1 to 44; sequence MSSLPDDLLLSIFARISRLYYPTLSLVSKSFRSLLASPDLYKAR. 3 Kelch repeats span residues 116 to 163, 165 to 218, and 260 to 304; these read DIYN…VLDR, IYVA…CIDG, and LFYI…YGGK.

This Arabidopsis thaliana (Mouse-ear cress) protein is F-box/kelch-repeat protein At5g51250.